Here is a 139-residue protein sequence, read N- to C-terminus: General odorant-binding protein 56a (139 aa).

Residues 1-19 (MNSYFVIALSALFVTLAVG) form the signal peptide. N-linked (GlcNAc...) asparagine glycosylation is present at Asn23. 3 cysteine pairs are disulfide-bonded: Cys39–Cys71, Cys67–Cys118, and Cys109–Cys127.

Belongs to the PBP/GOBP family. In terms of tissue distribution, expressed in ventral pits of larvae. In adults, it is not specifically expressed in chemosensory organs. Also expressed in stalk cells at the proximal tip of the wing disk.

Its subcellular location is the secreted. Functionally, present in the aqueous fluid surrounding olfactory sensory dendrites and are thought to aid in the capture and transport of hydrophobic odorants into and through this fluid. The sequence is that of General odorant-binding protein 56a (Obp56a) from Drosophila melanogaster (Fruit fly).